The sequence spans 466 residues: Argininosuccinate lyase (466 aa).

2-(N(omega)-L-arginino)succinate is bound by residues S27, N114, and T159. The Proton acceptor role is filled by H160. The active-site Proton donor is S281. Residues N289, Y321, Q326, and K329 each contribute to the 2-(N(omega)-L-arginino)succinate site.

The protein belongs to the lyase 1 family. Argininosuccinate lyase subfamily. In terms of assembly, homotetramer. Post-translationally, the N-terminus is blocked. As to expression, eye lens.

It carries out the reaction 2-(N(omega)-L-arginino)succinate = fumarate + L-arginine. The protein operates within amino-acid biosynthesis; L-arginine biosynthesis; L-arginine from L-ornithine and carbamoyl phosphate: step 3/3. In terms of biological role, delta crystallin, the principal crystallin in embryonic lens, is found only in birds and reptiles. This protein also functions as an enzymatically active argininosuccinate lyase, but it has a low activity. The polypeptide is Argininosuccinate lyase (ASL) (Columba livia (Rock dove)).